Here is a 260-residue protein sequence, read N- to C-terminus: Imidazole glycerol phosphate synthase subunit HisF (260 aa).

Active-site residues include Asp-11 and Asp-130.

This sequence belongs to the HisA/HisF family. As to quaternary structure, heterodimer of HisH and HisF.

The protein resides in the cytoplasm. The catalysed reaction is 5-[(5-phospho-1-deoxy-D-ribulos-1-ylimino)methylamino]-1-(5-phospho-beta-D-ribosyl)imidazole-4-carboxamide + L-glutamine = D-erythro-1-(imidazol-4-yl)glycerol 3-phosphate + 5-amino-1-(5-phospho-beta-D-ribosyl)imidazole-4-carboxamide + L-glutamate + H(+). It functions in the pathway amino-acid biosynthesis; L-histidine biosynthesis; L-histidine from 5-phospho-alpha-D-ribose 1-diphosphate: step 5/9. In terms of biological role, IGPS catalyzes the conversion of PRFAR and glutamine to IGP, AICAR and glutamate. The HisF subunit catalyzes the cyclization activity that produces IGP and AICAR from PRFAR using the ammonia provided by the HisH subunit. The polypeptide is Imidazole glycerol phosphate synthase subunit HisF (Thermomicrobium roseum (strain ATCC 27502 / DSM 5159 / P-2)).